We begin with the raw amino-acid sequence, 163 residues long: Transcription elongation factor GreB (163 aa).

The protein belongs to the GreA/GreB family. GreB subfamily.

Functionally, necessary for efficient RNA polymerase transcription elongation past template-encoded arresting sites. The arresting sites in DNA have the property of trapping a certain fraction of elongating RNA polymerases that pass through, resulting in locked ternary complexes. Cleavage of the nascent transcript by cleavage factors such as GreA or GreB allows the resumption of elongation from the new 3'terminus. GreB releases sequences of up to 9 nucleotides in length. This chain is Transcription elongation factor GreB, found in Vibrio parahaemolyticus serotype O3:K6 (strain RIMD 2210633).